We begin with the raw amino-acid sequence, 350 residues long: Protein RecA (350 aa).

67–74 (GPESSGKT) serves as a coordination point for ATP.

This sequence belongs to the RecA family.

Its subcellular location is the cytoplasm. Its function is as follows. Can catalyze the hydrolysis of ATP in the presence of single-stranded DNA, the ATP-dependent uptake of single-stranded DNA by duplex DNA, and the ATP-dependent hybridization of homologous single-stranded DNAs. It interacts with LexA causing its activation and leading to its autocatalytic cleavage. This is Protein RecA from Chlamydia felis (strain Fe/C-56) (Chlamydophila felis).